An 822-amino-acid polypeptide reads, in one-letter code: MTGLEEDQEFDFDFLFEFNQSDEGAAAAGATAERYSYATTGISSALPLPTAPPTLPAPCHDQQASAAGISAVGSAGHPAGYAGAVDGGPSGYFLPSGGVRPNGAPALESPRIEITSYLGLHHNNGQFFHDVAVEDVLPNPRRSPSTATLSLPNLEAYRDPSCLSPASSLSSRSCNSEASSYESSFSYPYASPQTSPWQSPCVSPKTTDPEEGFPRGLGACSLLGSPRHSPSTSPRTSVTEESWLGARTSRPSSPCNKRKYGLNGRQLFCSPHASPTPSPHSSPRVSVTDDTWLGNTTQYTSSAIVAAINALSTDSSLDLGDGVPVKARKTALDHSPSLALKVEPAAEDLGATPPTSDFPPEEFPPFQHIRKGAFCDQYLSVPQHPYPWARPRSPTPYASPSLPALDWQLPSHSGPYELRIEVQPKSHHRAHYETEGSRGAVKASAGGHPSVQLHGYVESEPLTLQLFIGTADDRLLRPHAFYQVHRITGKTVSTTSHEAVLSNTKVLEIPLLPENNMRAIIDCAGILKLRNSDIELRKGETDIGRKNTRVRLVFRVHIPQPNGRTLSLQVASNPIECSQRSAQELPLVEKQSAASCPVLGGKRMVLTGHNFLQDSKVVFVEKAPDGHHIWEMEAKTDGDLCKPNSLVVEIPPFRNQRITSPVQVNFYVCNGKRKRSQYQHFTYLPANAPVIKTEPSDDYEPALTCGPVSQGLNPLTKPCYGPPLALPPDPSSCLVAGFPPCPQRSAVMSPPPSASPKLHDLSCAPYSKGMAGPGHLGLQRPAGGVLGGQEAPRPGGPHPGAPQLHPLNLSQSIVTRLTEPQP.

The tract at residues 110–115 (PRIEIT) is calcineurin-binding. Residues 118–210 (LGLHHNNGQF…CVSPKTTDPE (93 aa)) are transactivation domain A (TAD-A). Residues 192–206 (PQTSPWQSPCVSPKT) show a composition bias toward polar residues. The disordered stretch occupies residues 192-289 (PQTSPWQSPC…HSSPRVSVTD (98 aa)). 2 repeat units span residues 195-211 (SPWQSPCVSPKTTDPEE) and 225-241 (SPRHSPSTSPRTSVTEE). The 3 X SP repeats stretch occupies residues 195–290 (SPWQSPCVSP…SSPRVSVTDD (96 aa)). A phosphoserine mark is found at serine 225 and serine 229. Over residues 225-242 (SPRHSPSTSPRTSVTEES) the composition is skewed to low complexity. Position 237 is a phosphoserine; by PKA (serine 237). Residues 257 to 259 (KRK) carry the Nuclear localization signal motif. Repeat unit 3 spans residues 274–290 (SPTPSPHSSPRVSVTDD). Serine 286 is subject to Phosphoserine; by PKA. The short motif at 302–313 (SAIVAAINALST) is the Nuclear export signal element. One can recognise an RHD domain in the interval 400–582 (PSLPALDWQL…NPIECSQRSA (183 aa)). The DNA-binding element occupies 429 to 436 (RAHYETEG). The short motif at 672 to 674 (KRK) is the Nuclear localization signal element. The segment at 772–822 (GPGHLGLQRPAGGVLGGQEAPRPGGPHPGAPQLHPLNLSQSIVTRLTEPQP) is disordered. Residues 808–822 (NLSQSIVTRLTEPQP) are compositionally biased toward polar residues.

In terms of assembly, member of the multicomponent NFATC transcription complex that consists of at least two components, a pre-existing cytoplasmic component NFATC2 and an inducible nuclear component NFATC1. Other members such as NFATC4, NFATC3 or members of the activating protein-1 family, MAF, GATA4 and Cbp/p300 can also bind the complex. NFATC proteins bind to DNA as monomers. Interacts with HOMER2 and HOMER3; this interaction may compete with calcineurin/PPP3CA-binding and hence prevent NFATC1 dephosphorylation and activation. Interacts with TLE6/GRG6. In terms of processing, phosphorylated by NFATC-kinase and GSK3B; phosphorylation induces NFATC1 nuclear exit and dephosphorylation by calcineurin promotes nuclear import. Phosphorylation by PKA and DYRK2 negatively modulates nuclear accumulation, and promotes subsequent phosphorylation by GSK3B or casein kinase 1.

It localises to the cytoplasm. It is found in the nucleus. Its function is as follows. Plays a role in the inducible expression of cytokine genes in T-cells, especially in the induction of the IL-2 or IL-4 gene transcription. Also controls gene expression in embryonic cardiac cells. Could regulate not only the activation and proliferation but also the differentiation and programmed death of T-lymphocytes as well as lymphoid and non-lymphoid cells. Required for osteoclastogenesis and regulates many genes important for osteoclast differentiation and function. In Sus scrofa (Pig), this protein is Nuclear factor of activated T-cells, cytoplasmic 1 (NFATC1).